Reading from the N-terminus, the 187-residue chain is Probable chemoreceptor glutamine deamidase CheD 1 (187 aa).

Belongs to the CheD family.

It catalyses the reaction L-glutaminyl-[protein] + H2O = L-glutamyl-[protein] + NH4(+). Functionally, probably deamidates glutamine residues to glutamate on methyl-accepting chemotaxis receptors (MCPs), playing an important role in chemotaxis. This chain is Probable chemoreceptor glutamine deamidase CheD 1, found in Ruegeria sp. (strain TM1040) (Silicibacter sp.).